A 99-amino-acid polypeptide reads, in one-letter code: Protein AC150 (99 aa).

One can recognise a Chitin-binding type-2 domain in the interval 38–96 (GFSCYNKPIGVNFPHPTRCDAFYMCVGLNQKLELICPEGFEFDPDVKNCVPISDYGCTA). A disulfide bridge connects residues Cys73 and Cys86.

Its subcellular location is the host nucleus. The protein localises to the virion. Its function is as follows. Plays a role in primary oral infection of the host. The polypeptide is Protein AC150 (Autographa californica nuclear polyhedrosis virus (AcMNPV)).